The chain runs to 705 residues: Probable E3 ubiquitin-protein ligase MID2 (705 aa).

The RING-type zinc finger occupies 30-80 (CPICLELFEDPLLLPCAHSLCFSCAHRILVSSCSSGESIEPITAFQCPTCR). The segment at 137 to 184 (IACQFCEQDPPRDAVKTCITCEVSYCDRCLRATHPNKKPFTSHRLVEP) adopts a B box-type 1; degenerate zinc-finger fold. Residues 190 to 232 (LRGITCLDHENEKVNMYCVSDDQLICALCKLVGRHRDHQVASL) form a B box-type 2 zinc finger. 4 residues coordinate Zn(2+): Cys-195, His-198, Cys-218, and His-224. Positions 233–301 (NDRFEKLKQT…IIQQRKQMIA (69 aa)) form a coiled coil. The region spanning 340-399 (LKENDQARFLQSAKNIAERVAMATASSQVLIPDINFNDAFENFALDFSREKKLLEGLDYL) is the COS domain. Residues 404–504 (PPSIREELCT…EPTRLKTNSQ (101 aa)) form the Fibronectin type-III domain. In terms of domain architecture, B30.2/SPRY spans 486–679 (INQAGSRNSE…ILSGLPAPDF (194 aa)).

It belongs to the TRIM/RBCC family. In terms of assembly, homodimer or heterodimer with MID1. Interacts with IGBP1. Phosphorylated on serine and threonine residues. Low abundance in brain and lung, with even lower levels in heart, liver, and kidney.

The protein localises to the cytoplasm. Its subcellular location is the cytoskeleton. The catalysed reaction is S-ubiquitinyl-[E2 ubiquitin-conjugating enzyme]-L-cysteine + [acceptor protein]-L-lysine = [E2 ubiquitin-conjugating enzyme]-L-cysteine + N(6)-ubiquitinyl-[acceptor protein]-L-lysine.. It participates in protein modification; protein ubiquitination. Its function is as follows. E3 ubiquitin ligase that plays a role in microtubule stabilization. Mediates the 'Lys-48'-linked polyubiquitination of LRRK2 to drive its localization to microtubules and its proteasomal degradation in neurons. This ubiquitination inhibits LRRK2 kinase activation by RAB29. This is Probable E3 ubiquitin-protein ligase MID2 (Mid2) from Mus musculus (Mouse).